The sequence spans 246 residues: 5-oxoprolinase subunit A (246 aa).

The protein belongs to the LamB/PxpA family. As to quaternary structure, forms a complex composed of PxpA, PxpB and PxpC.

The catalysed reaction is 5-oxo-L-proline + ATP + 2 H2O = L-glutamate + ADP + phosphate + H(+). In terms of biological role, catalyzes the cleavage of 5-oxoproline to form L-glutamate coupled to the hydrolysis of ATP to ADP and inorganic phosphate. The chain is 5-oxoprolinase subunit A from Vibrio cholerae serotype O1 (strain M66-2).